Reading from the N-terminus, the 258-residue chain is 3-deoxy-manno-octulosonate cytidylyltransferase (258 aa).

The protein belongs to the KdsB family.

It is found in the cytoplasm. It carries out the reaction 3-deoxy-alpha-D-manno-oct-2-ulosonate + CTP = CMP-3-deoxy-beta-D-manno-octulosonate + diphosphate. It functions in the pathway nucleotide-sugar biosynthesis; CMP-3-deoxy-D-manno-octulosonate biosynthesis; CMP-3-deoxy-D-manno-octulosonate from 3-deoxy-D-manno-octulosonate and CTP: step 1/1. Its pathway is bacterial outer membrane biogenesis; lipopolysaccharide biosynthesis. Functionally, activates KDO (a required 8-carbon sugar) for incorporation into bacterial lipopolysaccharide in Gram-negative bacteria. This chain is 3-deoxy-manno-octulosonate cytidylyltransferase, found in Parvibaculum lavamentivorans (strain DS-1 / DSM 13023 / NCIMB 13966).